A 1201-amino-acid polypeptide reads, in one-letter code: Kinesin-like protein costa (1201 aa).

In terms of domain architecture, Kinesin motor spans 4-391 (PIQVAVRIFP…LQFAFKVQCV (388 aa)). The interval 23–92 (SFGPTEPKKD…NGNDSGQKDY (70 aa)) is disordered. Positions 28–56 (EPKKDAQAVDEGADSKDSEAQVPAAEKDN) are enriched in basic and acidic residues. Residues 57-75 (PSISETDPNGNAEQDSAAD) are compositionally biased toward polar residues. Position 175–182 (175–182 (GQRGQGKS)) interacts with ATP. Disordered regions lie at residues 502–536 (AEEP…PDLD), 565–606 (HPKA…GASL), and 618–639 (ASQQ…ESSS). The segment covering 510 to 521 (SEAANSESPNSD) has biased composition (low complexity). 2 positions are modified to phosphoserine: Ser-599 and Ser-605. Coiled-coil stretches lie at residues 652 to 821 (AATA…ELVK) and 968 to 1001 (TKVI…ERVL).

The protein belongs to the TRAFAC class myosin-kinesin ATPase superfamily. Kinesin family. KIF27 subfamily. Homodimer (Potential). Binds microtubules. Interacts with ci, smo, sgg, CkIalpha and protein kinase A catalytic subunit. Interacts (via kinesin motor domain) with Ubr3. In terms of processing, polyubiquitinated by Ubr3, which leads to proteasomal degradation.

The protein localises to the cytoplasm. The protein resides in the cytoskeleton. Its function is as follows. Regulates cubitus interruptus (ci) processing by recruiting multiple kinases to promote its efficient phosphorylation. Scaffolds multiple kinases and ci into proximity to promote its hyperphosphorylation, which then targets it for SCFSlimb/proteasome-mediated processing to generate its repressor form. Hh signaling inhibits ci phosphorylation by interfering with the cos-ci-kinases complex formation. Negatively regulates hh-signaling pathways during various processes, including photoreceptor differentiation. May negatively regulate a hh-signaling pathway which functions in the intestinal immune response to bacterial uracil by activating the Duox-dependent production of reactive oxygen species (ROS). This chain is Kinesin-like protein costa (cos), found in Drosophila melanogaster (Fruit fly).